A 315-amino-acid polypeptide reads, in one-letter code: Methionyl-tRNA formyltransferase (315 aa).

113–116 lines the (6S)-5,6,7,8-tetrahydrofolate pocket; it reads SLLP.

Belongs to the Fmt family.

The enzyme catalyses L-methionyl-tRNA(fMet) + (6R)-10-formyltetrahydrofolate = N-formyl-L-methionyl-tRNA(fMet) + (6S)-5,6,7,8-tetrahydrofolate + H(+). In terms of biological role, attaches a formyl group to the free amino group of methionyl-tRNA(fMet). The formyl group appears to play a dual role in the initiator identity of N-formylmethionyl-tRNA by promoting its recognition by IF2 and preventing the misappropriation of this tRNA by the elongation apparatus. In Escherichia coli O127:H6 (strain E2348/69 / EPEC), this protein is Methionyl-tRNA formyltransferase.